We begin with the raw amino-acid sequence, 256 residues long: Triosephosphate isomerase (256 aa).

10-12 contributes to the substrate binding site; that stretch reads NWK. Residue His-97 is the Electrophile of the active site. Residue Glu-169 is the Proton acceptor of the active site. Substrate is bound by residues Gly-175, Ser-214, and 235–236; that span reads GG.

The protein belongs to the triosephosphate isomerase family. In terms of assembly, homodimer.

Its subcellular location is the cytoplasm. The catalysed reaction is D-glyceraldehyde 3-phosphate = dihydroxyacetone phosphate. It functions in the pathway carbohydrate biosynthesis; gluconeogenesis. Its pathway is carbohydrate degradation; glycolysis; D-glyceraldehyde 3-phosphate from glycerone phosphate: step 1/1. Functionally, involved in the gluconeogenesis. Catalyzes stereospecifically the conversion of dihydroxyacetone phosphate (DHAP) to D-glyceraldehyde-3-phosphate (G3P). The polypeptide is Triosephosphate isomerase (Haemophilus ducreyi (strain 35000HP / ATCC 700724)).